Consider the following 425-residue polypeptide: Histidine--tRNA ligase (425 aa).

The protein belongs to the class-II aminoacyl-tRNA synthetase family. In terms of assembly, homodimer.

It localises to the cytoplasm. The catalysed reaction is tRNA(His) + L-histidine + ATP = L-histidyl-tRNA(His) + AMP + diphosphate + H(+). This Aeromonas hydrophila subsp. hydrophila (strain ATCC 7966 / DSM 30187 / BCRC 13018 / CCUG 14551 / JCM 1027 / KCTC 2358 / NCIMB 9240 / NCTC 8049) protein is Histidine--tRNA ligase.